The primary structure comprises 62 residues: Large ribosomal subunit protein eL19 (62 aa).

The protein belongs to the eukaryotic ribosomal protein eL19 family.

This is Large ribosomal subunit protein eL19 (RPL19) from Zea mays (Maize).